The sequence spans 624 residues: Elongation factor 4 (624 aa).

Positions 17–203 (ALIRNFCIIA…RVVRDVPAPV (187 aa)) constitute a tr-type G domain. GTP-binding positions include 29–34 (DHGKST) and 150–153 (NKID).

The protein belongs to the TRAFAC class translation factor GTPase superfamily. Classic translation factor GTPase family. LepA subfamily.

Its subcellular location is the cell membrane. It carries out the reaction GTP + H2O = GDP + phosphate + H(+). Required for accurate and efficient protein synthesis under certain stress conditions. May act as a fidelity factor of the translation reaction, by catalyzing a one-codon backward translocation of tRNAs on improperly translocated ribosomes. Back-translocation proceeds from a post-translocation (POST) complex to a pre-translocation (PRE) complex, thus giving elongation factor G a second chance to translocate the tRNAs correctly. Binds to ribosomes in a GTP-dependent manner. The protein is Elongation factor 4 of Streptomyces griseus subsp. griseus (strain JCM 4626 / CBS 651.72 / NBRC 13350 / KCC S-0626 / ISP 5235).